The chain runs to 704 residues: DNA ligase (704 aa).

Residues 43 to 47 (DADYD), 92 to 93 (SL), and E124 contribute to the NAD(+) site. K126 (N6-AMP-lysine intermediate) is an active-site residue. Residues R147, E182, K298, and K322 each coordinate NAD(+). Zn(2+) is bound by residues C427, C430, C445, and C451. The BRCT domain occupies 625–704 (PVASPVAGKI…DGWLRLIGDA (80 aa)).

This sequence belongs to the NAD-dependent DNA ligase family. LigA subfamily. It depends on Mg(2+) as a cofactor. Mn(2+) serves as cofactor.

It carries out the reaction NAD(+) + (deoxyribonucleotide)n-3'-hydroxyl + 5'-phospho-(deoxyribonucleotide)m = (deoxyribonucleotide)n+m + AMP + beta-nicotinamide D-nucleotide.. DNA ligase that catalyzes the formation of phosphodiester linkages between 5'-phosphoryl and 3'-hydroxyl groups in double-stranded DNA using NAD as a coenzyme and as the energy source for the reaction. It is essential for DNA replication and repair of damaged DNA. This Cereibacter sphaeroides (strain ATCC 17029 / ATH 2.4.9) (Rhodobacter sphaeroides) protein is DNA ligase.